The primary structure comprises 209 residues: Response regulator protein VraR (209 aa).

The Response regulatory domain occupies 4–120 (KVLFVDDHEM…DIADAVRKTY (117 aa)). Aspartate 55 carries the post-translational modification 4-aspartylphosphate. In terms of domain architecture, HTH luxR-type spans 141 to 206 (RAELYEMLTE…QAVIYAFQHN (66 aa)). A DNA-binding region (H-T-H motif) is located at residues 165–184 (NQEIASASHITIKTVKTHVS).

In terms of processing, phosphorylated by VraS.

The protein resides in the cytoplasm. In terms of biological role, member of the two-component regulatory system VraS/VraR involved in the control of the cell wall peptidoglycan biosynthesis. The polypeptide is Response regulator protein VraR (vraR) (Staphylococcus epidermidis (strain ATCC 35984 / DSM 28319 / BCRC 17069 / CCUG 31568 / BM 3577 / RP62A)).